We begin with the raw amino-acid sequence, 714 residues long: Fatty acid oxidation complex subunit alpha (714 aa).

Positions 1-190 are enoyl-CoA hydratase; the sequence is MEMASAFTLN…KLGLVDDVVP (190 aa). The segment at 306-714 is 3-hydroxyacyl-CoA dehydrogenase; that stretch reads APLNSVGILG…FWKTTATDLQ (409 aa).

It in the N-terminal section; belongs to the enoyl-CoA hydratase/isomerase family. The protein in the central section; belongs to the 3-hydroxyacyl-CoA dehydrogenase family. In terms of assembly, heterotetramer of two alpha chains (FadJ) and two beta chains (FadI).

The protein localises to the cytoplasm. It catalyses the reaction a (3S)-3-hydroxyacyl-CoA = a (2E)-enoyl-CoA + H2O. It carries out the reaction a 4-saturated-(3S)-3-hydroxyacyl-CoA = a (3E)-enoyl-CoA + H2O. The enzyme catalyses a (3S)-3-hydroxyacyl-CoA + NAD(+) = a 3-oxoacyl-CoA + NADH + H(+). The catalysed reaction is (3S)-3-hydroxybutanoyl-CoA = (3R)-3-hydroxybutanoyl-CoA. Its pathway is lipid metabolism; fatty acid beta-oxidation. Functionally, catalyzes the formation of a hydroxyacyl-CoA by addition of water on enoyl-CoA. Also exhibits 3-hydroxyacyl-CoA epimerase and 3-hydroxyacyl-CoA dehydrogenase activities. The protein is Fatty acid oxidation complex subunit alpha of Escherichia coli O7:K1 (strain IAI39 / ExPEC).